A 156-amino-acid polypeptide reads, in one-letter code: Low molecular weight phosphotyrosine protein phosphatase (156 aa).

Cysteine 11 (nucleophile) is an active-site residue. Arginine 17 is a catalytic residue. Aspartate 128 acts as the Proton donor in catalysis.

The protein belongs to the low molecular weight phosphotyrosine protein phosphatase family.

Its subcellular location is the cytoplasm. The catalysed reaction is O-phospho-L-tyrosyl-[protein] + H2O = L-tyrosyl-[protein] + phosphate. It catalyses the reaction a phosphate monoester + H2O = an alcohol + phosphate. May contribute to dephosphorylation of 'Tyr-15' of cdc2. The sequence is that of Low molecular weight phosphotyrosine protein phosphatase (stp1) from Schizosaccharomyces pombe (strain 972 / ATCC 24843) (Fission yeast).